The sequence spans 1843 residues: Zinc finger protein 142 (1843 aa).

C2H2-type zinc fingers lie at residues 103 to 127 and 164 to 186; these read YFCERCEQSFAEPTLLSVHQCTETH and LPCPVCRQEFVQPQALKSHFKIH. The tract at residues 294 to 357 is disordered; sequence PAAKLPPGHR…LEGHVGSGTE (64 aa). The span at 318–329 shows a compositional bias: acidic residues; sequence SAEEEDAEEEES. Basic and acidic residues predominate over residues 330–340; that stretch reads VTQKDSQKVMD. The residue at position 354 (S354) is a Phosphoserine. The C2H2-type 3 zinc-finger motif lies at 363-385; sequence HMCPECKRCFKKRTHLVEHLHLH. The C2H2-type 4; degenerate zinc-finger motif lies at 391 to 413; that stretch reads LQCPNCQKFFTSKSKLKTHLLRE. C2H2-type zinc fingers lie at residues 453-475, 543-566, 601-623, 629-651, 657-679, 685-707, and 744-767; these read YACPVCREEFRLSQALKEHLKSH, FHCPHCDFACSNKHLFRKHKKQGH, HQCSECNFATAHKRVLIRHMLLH, HKCELCDFTCRDVSYLSKHMLTH, YMCTECGYVTKWKHYLSVHMRKH, YQCNQCSYRCHRADQLSSHKLRH, and YPCRYCSYQSRHKQALLSHENCKH. K794 is covalently cross-linked (Glycyl lysine isopeptide (Lys-Gly) (interchain with G-Cter in SUMO2)). Disordered stretches follow at residues 819 to 888 and 1103 to 1177; these read QCLA…LGEV and PKPV…TGTS. Over residues 837–846 the composition is skewed to basic and acidic residues; it reads PEREDREHEI. Positions 1157-1167 are enriched in pro residues; that stretch reads LPTPSDFPTSP. A compositionally biased stretch (polar residues) spans 1168-1177; it reads PENSLPTGTS. 9 C2H2-type zinc fingers span residues 1331-1354, 1388-1411, 1446-1469, 1514-1537, 1608-1630, 1636-1658, 1664-1686, 1692-1715, and 1721-1743; these read LQCGDCGFTCKQSRCLQQHRRLKH, IPCSSCPQTFGTNSKLRLHQLRVH, FSCTQCEAQFSSETALKQHALRRH, LECGACQESFPNRPALDEHRRQHH, YKCTDCAYSTKNRQKITWHSRIH, YHCHLCAYACADPSRLKYHMRIH, YLCPECGYKCKWVNQLKYHMTKH, YQCPECEYCTNRADALRVHRETRH, and FMCEQCGKAFKTRFLLRTHLRKH. Glycyl lysine isopeptide (Lys-Gly) (interchain with G-Cter in SUMO2) cross-links involve residues K1353 and K1402. K1747 is covalently cross-linked (Glycyl lysine isopeptide (Lys-Gly) (interchain with G-Cter in SUMO2)). A C2H2-type 21 zinc finger spans residues 1749-1771; sequence YVCNVCHRAFRWAAGLRHHALTH. The tract at residues 1795 to 1843 is disordered; sequence HVRRHHPDQADPNQGVGKDPTTPTVHLHDVKLEDPSPPAPPAPSTGPEG. Over residues 1829-1843 the composition is skewed to pro residues; it reads PSPPAPPAPSTGPEG.

The protein belongs to the krueppel C2H2-type zinc-finger protein family.

Its subcellular location is the nucleus. May be involved in transcriptional regulation. The chain is Zinc finger protein 142 from Mus musculus (Mouse).